Here is a 553-residue protein sequence, read N- to C-terminus: Glycine betaine/proline/choline transporter VP1723 (553 aa).

12 helical membrane-spanning segments follow: residues 43-63, 85-105, 122-142, 191-211, 231-251, 278-298, 310-330, 362-382, 393-413, 443-463, 490-510, and 515-535; these read NRVF…TLTF, FFLA…VTPL, AGWL…FFGV, WALH…IFSF, VWGW…VFGL, TQVV…VAGL, MILA…MAIL, WTAF…MFIA, FIIC…TAFG, VMPF…VFFI, VFWC…GGLA, and MAVT…VSLI.

This sequence belongs to the BCCT transporter (TC 2.A.15) family.

It localises to the cell inner membrane. Functionally, involved in the uptake of osmoprotectants. Can transport glycine betaine, proline and choline. This Vibrio parahaemolyticus serotype O3:K6 (strain RIMD 2210633) protein is Glycine betaine/proline/choline transporter VP1723.